We begin with the raw amino-acid sequence, 334 residues long: RNA ligase 2 (334 aa).

Residues 1-234 are adenylyltransferase; it reads MFKKYSSLEN…KCKNSKFSEK (234 aa). AMP contacts are provided by E34, K35, I36, N40, R55, and E99. K35 (N6-AMP-lysine intermediate) is an active-site residue. The Mg(2+) site is built by I162, L164, N166, E204, and Y206. K225 and K227 together coordinate AMP.

The protein belongs to the RNA ligase 2 family. Mg(2+) serves as cofactor. Mn(2+) is required as a cofactor.

The catalysed reaction is ATP + (ribonucleotide)n-3'-hydroxyl + 5'-phospho-(ribonucleotide)m = (ribonucleotide)n+m + AMP + diphosphate.. In terms of biological role, repairs 3'-OH/5'-PO4 nicks in duplex RNA or RNA:DNA hybrid in which the broken 3'-OH strand is RNA. The nick ligation reaction entails three nucleotidyl transfer steps. In the first step, the RNA ligase reacts with ATP in the absence of nucleic acid to form a covalent ligase-AMP intermediate and release pyrophosphate. In step 2, the ligase-AMP binds to the nicked duplex nucleic acid and transfers the adenylate to the 5'-PO4 terminus to form an adenylylated nicked intermediate. In step 3, the RNA ligase directs the attack of the nick 3'-OH on the 5'-phosphoanhydride linkage, resulting in a repaired 3' - 5' phosphodiester and release of AMP. This is RNA ligase 2 (Y10A) from Enterobacteria phage T4 (Bacteriophage T4).